Reading from the N-terminus, the 808-residue chain is Phospholipase D alpha 1 (808 aa).

Residues 1-125 form the C2 domain; sequence MSKVLLHGTL…LDGDEVDKWI (125 aa). Asp186 is a binding site for Ca(2+). Residues 326–364 enclose the PLD phosphodiesterase 1 domain; sequence TMFTHHQKIVVVDHELPRGGSQKRRVMSFVGGIDLCDGR. Catalysis depends on residues His331, Lys333, and Asp338. His331 is an a 1,2-diacyl-sn-glycero-3-phosphate binding site. Ca(2+)-binding residues include His370 and His404. A 1,2-diacyl-sn-glycero-3-phosphate-binding residues include Gln520 and His659. The 28-residue stretch at 654–681 folds into the PLD phosphodiesterase 2 domain; that stretch reads FMIYVHSKMMIVDDEYIIVGSANINQRS. Active-site residues include His659, Lys661, and Asp666. Glu720 is a Ca(2+) binding site.

Belongs to the phospholipase D family. C2-PLD subfamily. As to quaternary structure, interacts (via C2 domain) with CARDA (via RGD or KGE motifs). The cofactor is Ca(2+).

The enzyme catalyses a 1,2-diacyl-sn-glycero-3-phosphocholine + H2O = a 1,2-diacyl-sn-glycero-3-phosphate + choline + H(+). Its function is as follows. Hydrolyzes glycerol-phospholipids at the terminal phosphodiesteric bond. Plays an important role in various cellular processes. This is Phospholipase D alpha 1 from Cynara cardunculus (Cardoon).